The primary structure comprises 447 residues: Phosphoglucosamine mutase (447 aa).

Ser100 acts as the Phosphoserine intermediate in catalysis. Positions 100, 239, 241, and 243 each coordinate Mg(2+). At Ser100 the chain carries Phosphoserine.

The protein belongs to the phosphohexose mutase family. Requires Mg(2+) as cofactor. Post-translationally, activated by phosphorylation.

It catalyses the reaction alpha-D-glucosamine 1-phosphate = D-glucosamine 6-phosphate. In terms of biological role, catalyzes the conversion of glucosamine-6-phosphate to glucosamine-1-phosphate. The protein is Phosphoglucosamine mutase of Halalkalibacterium halodurans (strain ATCC BAA-125 / DSM 18197 / FERM 7344 / JCM 9153 / C-125) (Bacillus halodurans).